A 533-amino-acid polypeptide reads, in one-letter code: Bifunctional aspartate aminotransferase and L-aspartate beta-decarboxylase (533 aa).

L-aspartate-binding residues include glycine 115 and asparagine 256. Lysine 315 carries the N6-(pyridoxal phosphate)lysine modification. L-aspartate is bound at residue arginine 497.

The protein belongs to the class-I pyridoxal-phosphate-dependent aminotransferase family. Homododecamer. Pyridoxal 5'-phosphate serves as cofactor.

The catalysed reaction is L-aspartate + H(+) = L-alanine + CO2. It carries out the reaction L-aspartate + 2-oxoglutarate = oxaloacetate + L-glutamate. Its function is as follows. Bifunctional enzyme that has both L-aspartate decarboxylase and transaminase activity. The polypeptide is Bifunctional aspartate aminotransferase and L-aspartate beta-decarboxylase (Comamonas testosteroni (Pseudomonas testosteroni)).